Consider the following 185-residue polypeptide: Ribosome hibernation promotion factor (185 aa).

Positions 1-125 (MIKFNIRGEN…PLDTTDEVAE (125 aa)) are probably still associates with ribosome. Residues 126-185 (DHVDIVRTKHVALKPMDAEEAVLQMDMLGHDFYVFTDADSNGTHVVYRRTDGRYGLIETE) are required but not sufficient to restore ribosome dimerization, in vitro will replace E.coli RMF in ribosome dimerization.

This sequence belongs to the HPF/YfiA ribosome-associated protein family. Long HPF subfamily. In terms of assembly, interacts with 100S ribosomes in stationary phase; alters the relative position of the 30S and 50S subunits.

The protein resides in the cytoplasm. Required for dimerization of active 70S ribosomes into 100S ribosomes in stationary phase; 100S ribosomes are translationally inactive and sometimes present during exponential growth. Able to dimerize E.coli 70S ribosomes in vitro. The chain is Ribosome hibernation promotion factor from Lactococcus lactis subsp. cremoris (strain MG1363).